We begin with the raw amino-acid sequence, 463 residues long: Thiamine-repressible acid phosphatase SPBC21H7.03c (463 aa).

The N-terminal stretch at 1–18 (MQLCIISLWFLAAFIVNA) is a signal peptide. The active-site Nucleophile is histidine 69. N-linked (GlcNAc...) asparagine glycosylation is found at asparagine 98, asparagine 104, asparagine 221, and asparagine 324. Aspartate 341 serves as the catalytic Proton donor. Asparagine 439 and asparagine 458 each carry an N-linked (GlcNAc...) asparagine glycan.

It belongs to the histidine acid phosphatase family.

Its subcellular location is the secreted. The protein resides in the cell wall. It carries out the reaction a phosphate monoester + H2O = an alcohol + phosphate. Its function is as follows. May dephosphorylate thiamine phosphates. This Schizosaccharomyces pombe (strain 972 / ATCC 24843) (Fission yeast) protein is Thiamine-repressible acid phosphatase SPBC21H7.03c.